Here is a 603-residue protein sequence, read N- to C-terminus: Mono(2-hydroxyethyl) terephthalate hydrolase (603 aa).

An N-terminal signal peptide occupies residues 1–17 (MQTTVTTMLLASVALAA). Cys18 carries N-palmitoyl cysteine lipidation. Cys18 is lipidated: S-diacylglycerol cysteine. Residues 24 to 44 (TPLPLPQQQPPQQEPPPPPVP) are disordered. Positions 26–44 (LPLPQQQPPQQEPPPPPVP) are enriched in pro residues. Cys51 and Cys92 form a disulfide bridge. A 4-[(2-hydroxyethoxy)carbonyl]benzoate-binding site is contributed by Gly132. 4 disulfides stabilise this stretch: Cys224–Cys529, Cys303–Cys320, Cys340–Cys348, and Cys577–Cys599. Ser225 serves as the catalytic Acyl-ester intermediate. Glu226 serves as a coordination point for 4-[(2-hydroxyethoxy)carbonyl]benzoate. Ca(2+) contacts are provided by Asp304, Asp307, Leu309, Asp311, and Ile313. 4-[(2-hydroxyethoxy)carbonyl]benzoate contacts are provided by Arg411 and Ser416. Catalysis depends on charge relay system residues Asp492 and His528. 4-[(2-hydroxyethoxy)carbonyl]benzoate is bound at residue His528.

Belongs to the tannase family.

The protein resides in the cell outer membrane. It carries out the reaction 4-[(2-hydroxyethoxy)carbonyl]benzoate + H2O = terephthalate + ethylene glycol + H(+). Functionally, involved in the degradation and assimilation of the plastic poly(ethylene terephthalate) (PET), which allows I.sakaiensis to use PET as its major energy and carbon source for growth. Likely acts synergistically with PETase to depolymerize PET. Catalyzes the hydrolysis of mono(2-hydroxyethyl) terephthalate (MHET) into its two environmentally benign monomers, terephthalate and ethylene glycol. Does not show activity against PET, bis(hydroxyethyl) terephthalate (BHET), pNP-aliphatic esters or typical aromatic ester compounds catalyzed by the tannase family enzymes, such as ethyl gallate and ethyl ferulate. The sequence is that of Mono(2-hydroxyethyl) terephthalate hydrolase from Piscinibacter sakaiensis (Ideonella sakaiensis).